Consider the following 591-residue polypeptide: MRTNYCGQLNLSHVGQEVTLCGWVHRRRDLGGLIFIDLRDREGVVQVFFDPDHQDAFRQASELRNEFCVQVTGTVRARPESQRNSEMPTGEIEVFGHGLTLINRAEPLPLDFNQTNSEENRLKYRYLDLRRPEMAARLKTRAKITAFVRRFMDNHGFLDIETPMLTKATPEGARDYLVPSRVHKGKFYALPQSPQLFKQLLMMSGFDRYYQIVKCFRDEDLRADRQPEFTQIDVETSFMSAGQVREIMEALARALWMEIKGVDLGDFPVMTFAEAMRRFGSDKPDLRNPLELVDVADLVKSVDFKVFSGPANDARGRVIALRVPGGATLTRKNIDEYGQFVGIYGAKGLAWMKVNDRAAGMDGVQSPIAKFLNAEVLEGILARSGAQSGDIIFFGADSAKVATDAMGALRLKVGRDLQLTDESRWAPLWVVDFPMFEEDGEGGLAAMHHPFTSPRDISPEALKANPVGAIANAYDMVMNGYEVGGGSVRIHSGAMQSAVFDILGINEQEQREKFGFLLDALKFGTPPHAGLAFGLDRLVMLLTGTENIRDVIAFPKTTAAACPLTDAPSRANPAALQELSIAVCAKQGSDA.

Residue E171 coordinates L-aspartate. The aspartate stretch occupies residues 195-198 (QLFK). Residue R217 participates in L-aspartate binding. Residues 217 to 219 (RDE) and Q226 contribute to the ATP site. H448 is a binding site for L-aspartate. E482 provides a ligand contact to ATP. R489 contacts L-aspartate. Position 534 to 537 (534 to 537 (GLDR)) interacts with ATP.

Belongs to the class-II aminoacyl-tRNA synthetase family. Type 1 subfamily. Homodimer.

It localises to the cytoplasm. It catalyses the reaction tRNA(Asp) + L-aspartate + ATP = L-aspartyl-tRNA(Asp) + AMP + diphosphate. Functionally, catalyzes the attachment of L-aspartate to tRNA(Asp) in a two-step reaction: L-aspartate is first activated by ATP to form Asp-AMP and then transferred to the acceptor end of tRNA(Asp). In Edwardsiella ictaluri (strain 93-146), this protein is Aspartate--tRNA ligase.